Reading from the N-terminus, the 883-residue chain is Putative GTP diphosphokinase RSH1, chloroplastic (883 aa).

Residues 1-55 (MTSASSMSVSVECVNICNLTKGDGNARSDCSALSCAWKAPRALTGFLASTAHPPV) constitute a chloroplast transit peptide. Residues 172–279 (FIIHPVAVAR…VKLADRLHNM (108 aa)) form the HD domain. One can recognise a TGS domain in the interval 562–625 (LGSRVFVFTP…ENAEVVEIVT (64 aa)). Residues 710 to 726 (QSQDKSRDTTPAPQNGS) show a composition bias toward polar residues. The tract at residues 710–746 (QSQDKSRDTTPAPQNGSVWAPKVNGKHNKAIKNSSSD) is disordered. The 72-residue stretch at 796 to 867 (WLCVVSMDRK…LVLGVLGWSS (72 aa)) folds into the ACT domain.

It belongs to the RelA/SpoT family. In terms of assembly, interacts with RPP5.

The protein localises to the plastid. It localises to the chloroplast. It carries out the reaction GTP + ATP = guanosine 3'-diphosphate 5'-triphosphate + AMP. May be involved in a rapid plant ppGpp (guanosine 3'-diphosphate 5'-diphosphate)-mediated response to pathogens and other stresses. The chain is Putative GTP diphosphokinase RSH1, chloroplastic (RSH1) from Arabidopsis thaliana (Mouse-ear cress).